The primary structure comprises 709 residues: Homeobox-leucine zipper protein HDG4 (709 aa).

The tract at residues 61-92 (ESGSGKSTGSGHDPVENTAIEQEPPAAKKKRY) is disordered. A DNA-binding region (homeobox) is located at residues 88–147 (KKKRYHRHTASQIQQMEALFKENAHPDTKTRLRLSKKLGLSPIQVKFWFQNKRTQIKAQQ). The stretch at 137–205 (QNKRTQIKAQ…LDRLRSIVSM (69 aa)) forms a coiled coil. The START domain maps to 229–466 (AEEEKAIDME…LKRQCERMAS (238 aa)).

This sequence belongs to the HD-ZIP homeobox family. Class IV subfamily. As to expression, expressed in flowers.

It is found in the nucleus. Its function is as follows. Probable transcription factor. The polypeptide is Homeobox-leucine zipper protein HDG4 (Arabidopsis thaliana (Mouse-ear cress)).